A 423-amino-acid polypeptide reads, in one-letter code: MDKIIVKGGNTRLSGEVVIEGAKNAVLPLLAATILASEGQTTLTNVPILSDVYTMNNVVRGLDIAVDFDEENNTVVVDASGEILDQAPYEYVSKMRASIVVLGPILARNGHAKVSMPGGCTIGSRPIDLHLKGLEAMGAKITQVGGDITATAEKLKGATIYMDFPSVGATQNLMMAATLADGVTTIENAAREPEIVDLAILLNEMGANVKGAGTEKLVIKGVKSLHGTQHAVIQDRIEAGTFMVAAAMTSGNVLIKDAIWEHNRPLISKLLEMGVDVKEEDRGIRVKSDVSKLKPVAVKTLPHPGFPTDMQAQFTALMAVVKGKSSISETVFENRFQHLEEMRRMGLHSEILRDTAMIHGGLPLQGARVMSTDLRASAALILTGMVAEGTTTVGKLTHLDRGYYKFHEKLAKLGAQISRVSEA.

23-24 (KN) contacts phosphoenolpyruvate. UDP-N-acetyl-alpha-D-glucosamine is bound at residue Arg-96. Cys-120 serves as the catalytic Proton donor. Position 120 is a 2-(S-cysteinyl)pyruvic acid O-phosphothioketal (Cys-120). Residues 125 to 129 (RPIDL), Asp-309, and Val-331 contribute to the UDP-N-acetyl-alpha-D-glucosamine site.

It belongs to the EPSP synthase family. MurA subfamily.

Its subcellular location is the cytoplasm. It catalyses the reaction phosphoenolpyruvate + UDP-N-acetyl-alpha-D-glucosamine = UDP-N-acetyl-3-O-(1-carboxyvinyl)-alpha-D-glucosamine + phosphate. Its pathway is cell wall biogenesis; peptidoglycan biosynthesis. Its function is as follows. Cell wall formation. Adds enolpyruvyl to UDP-N-acetylglucosamine. This Streptococcus thermophilus (strain CNRZ 1066) protein is UDP-N-acetylglucosamine 1-carboxyvinyltransferase 1.